The chain runs to 711 residues: Toxin RTX-III translocation ATP-binding protein (711 aa).

A Peptidase C39 domain is found at 1 to 129; the sequence is MESQMPFNEK…EIFQGGMILI (129 aa). Histidine 87 is a catalytic residue. An ABC transmembrane type-1 domain is found at 158–440; the sequence is FVETIIVSIF…LAQLWQDFQQ (283 aa). The next 5 membrane-spanning stretches (helical) occupy residues 162–182, 195–215, 273–293, 299–319, and 392–412; these read IIVS…FQVV, LNVI…LSGL, ALTS…MWYY, IVIL…SPIL, and VMII…LSIG. Residues 472-707 form the ABC transporter domain; it reads IAFKHIRFRY…ENGLYYYLNQ (236 aa). 506 to 513 contacts ATP; sequence GRSGSGKS.

The protein belongs to the ABC transporter superfamily. Protein-1 exporter (TC 3.A.1.109) family. In terms of assembly, homodimer.

It localises to the cell membrane. Its function is as follows. Involved in the transport of the toxin RTX-III. This is Toxin RTX-III translocation ATP-binding protein (apxIIIB) from Actinobacillus pleuropneumoniae (Haemophilus pleuropneumoniae).